The sequence spans 70 residues: Small ribosomal subunit protein bS21 (70 aa).

The interval 43–70 (TERKRKAAAAVKRQHKRLRSLTLPPKLY) is disordered. Over residues 45–61 (RKRKAAAAVKRQHKRLR) the composition is skewed to basic residues.

Belongs to the bacterial ribosomal protein bS21 family.

In Dechloromonas aromatica (strain RCB), this protein is Small ribosomal subunit protein bS21.